Here is a 194-residue protein sequence, read N- to C-terminus: Superoxide dismutase [Cu-Zn] (194 aa).

The signal sequence occupies residues 1–20; the sequence is MTRPLALIIFLVAILTNTDP. The Cu cation site is built by His85 and His104. Residues Cys96 and Cys188 are joined by a disulfide bond. Zn(2+) is bound by residues His104, His112, His121, and Asp124. His162 contacts Cu cation.

It belongs to the Cu-Zn superoxide dismutase family. Homodimer. Cu cation serves as cofactor. The cofactor is Zn(2+).

The catalysed reaction is 2 superoxide + 2 H(+) = H2O2 + O2. In terms of biological role, destroys radicals which are normally produced within the cells and which are toxic to biological systems. The polypeptide is Superoxide dismutase [Cu-Zn] (Ramazzottius varieornatus (Water bear)).